Reading from the N-terminus, the 398-residue chain is MIFKPELIKGIAKTSHPYGCRKEVLNQIEYCKNAKQFHGPKKVLIIGASSGFGLATRISLAFGGAKADTIGVSFETGITDRRTGTAGWYNNIFFKEFAEKEGLIAKNFIGDAFSDEVKENVIKYIKNEFGKIDLLIYSLASPRRKDPKTGNIYDSTLKTTSGEFQGPTIDMETDELVTTKVNSATDKEIEATKKVMGGEDWSEWCKLLLENDCLSDKAITISYSYIGASRTYKIYREGTIGEAKRHLENTAIQIDKEWQKKINGKAFVSVNKAIVTKASAYIPSFSLYAAVLYKVMKEKNLHENCIMQMQRMFADKIYAENLLEFDDSGRLRMDDWELREDVQSEVNELWEKITPDNFKILSDYDGYKKEFMQLNGFEIDGVNYSEDIDIEALKRLEP.

Residues 47-52, 74-75, 111-112, and 139-140 contribute to the NAD(+) site; these read GASSGF, FE, DA, and LA. Tyr-225 is a substrate binding site. The Proton donor role is filled by Tyr-235. Residues Lys-244 and 274-276 each bind NAD(+); that span reads IVT.

This sequence belongs to the TER reductase family. In terms of assembly, monomer.

It carries out the reaction a 2,3-saturated acyl-CoA + NAD(+) = a (2E)-enoyl-CoA + NADH + H(+). It participates in lipid metabolism; fatty acid biosynthesis. Functionally, involved in the fatty acid synthesis (FAS II). Catalyzes the reduction of a carbon-carbon double bond in an enoyl moiety that is covalently linked to a coenzyme A (CoA). This Clostridium beijerinckii (strain ATCC 51743 / NCIMB 8052) (Clostridium acetobutylicum) protein is Trans-2-enoyl-CoA reductase [NADH].